The sequence spans 204 residues: Ciliary microtubule inner protein 7 (204 aa).

The protein resides in the cell projection. It localises to the cilium. The protein is Ciliary microtubule inner protein 7 of Homo sapiens (Human).